A 194-amino-acid chain; its full sequence is ATP-dependent Clp protease proteolytic subunit 1 (194 aa).

Residue Ser-98 is the Nucleophile of the active site. The active site involves His-123.

It belongs to the peptidase S14 family. In terms of assembly, fourteen ClpP subunits assemble into 2 heptameric rings which stack back to back to give a disk-like structure with a central cavity, resembling the structure of eukaryotic proteasomes.

The protein resides in the cytoplasm. The enzyme catalyses Hydrolysis of proteins to small peptides in the presence of ATP and magnesium. alpha-casein is the usual test substrate. In the absence of ATP, only oligopeptides shorter than five residues are hydrolyzed (such as succinyl-Leu-Tyr-|-NHMec, and Leu-Tyr-Leu-|-Tyr-Trp, in which cleavage of the -Tyr-|-Leu- and -Tyr-|-Trp bonds also occurs).. In terms of biological role, cleaves peptides in various proteins in a process that requires ATP hydrolysis. Has a chymotrypsin-like activity. Plays a major role in the degradation of misfolded proteins. ClpXP1 is involved in the complete degradation of the Site-2 clipped anti-sigma-W factor RsiW. This results in the release of SigW and the transcription activation of the genes under the control of the sigma-W factor. This Halalkalibacterium halodurans (strain ATCC BAA-125 / DSM 18197 / FERM 7344 / JCM 9153 / C-125) (Bacillus halodurans) protein is ATP-dependent Clp protease proteolytic subunit 1.